We begin with the raw amino-acid sequence, 264 residues long: Stress response regulator protein 1 (264 aa).

Positions 50-74 (IYSDCDNNKNNNDDDDDDDDYNKDT) are disordered. Residues 62 to 74 (DDDDDDDDYNKDT) show a composition bias toward acidic residues. A Response regulatory domain is found at 138-256 (RFLIVDDNII…LDLIGGSIDD (119 aa)). A 4-aspartylphosphate modification is found at aspartate 189.

Its function is as follows. Required for stress adaptation, morphogenesis and virulence. This Candida tropicalis (strain ATCC MYA-3404 / T1) (Yeast) protein is Stress response regulator protein 1 (SRR1).